Consider the following 213-residue polypeptide: Probable GTP-binding protein EngB (213 aa).

Residues 30–204 form the EngB-type G domain; the sequence is SVQSIAFMGR…REFILETLGI (175 aa). GTP is bound by residues 38–45, 65–69, 83–86, 150–153, and 183–185; these read GRSNSGKS, GKTKL, DLPG, TKID, and ISA. Mg(2+) is bound by residues Ser-45 and Thr-67.

The protein belongs to the TRAFAC class TrmE-Era-EngA-EngB-Septin-like GTPase superfamily. EngB GTPase family. Mg(2+) is required as a cofactor.

Necessary for normal cell division and for the maintenance of normal septation. The protein is Probable GTP-binding protein EngB of Leptospira biflexa serovar Patoc (strain Patoc 1 / Ames).